We begin with the raw amino-acid sequence, 207 residues long: Holliday junction branch migration complex subunit RuvA (207 aa).

A domain I region spans residues 1–64 (MISYIKGELA…EDECSLFGFL (64 aa)). The segment at 65-143 (TRDDLSMFKM…LDEVFESALS (79 aa)) is domain II. A flexible linker region spans residues 144 to 155 (KNKKADNNSNVS). Residues 156 to 207 (NVMMIRNDAVEALVSLGYSSKDALVAVKEVEDIENKDSETVLKEALKKLVKF) form a domain III region.

Belongs to the RuvA family. As to quaternary structure, homotetramer. Forms an RuvA(8)-RuvB(12)-Holliday junction (HJ) complex. HJ DNA is sandwiched between 2 RuvA tetramers; dsDNA enters through RuvA and exits via RuvB. An RuvB hexamer assembles on each DNA strand where it exits the tetramer. Each RuvB hexamer is contacted by two RuvA subunits (via domain III) on 2 adjacent RuvB subunits; this complex drives branch migration. In the full resolvosome a probable DNA-RuvA(4)-RuvB(12)-RuvC(2) complex forms which resolves the HJ.

It localises to the cytoplasm. In terms of biological role, the RuvA-RuvB-RuvC complex processes Holliday junction (HJ) DNA during genetic recombination and DNA repair, while the RuvA-RuvB complex plays an important role in the rescue of blocked DNA replication forks via replication fork reversal (RFR). RuvA specifically binds to HJ cruciform DNA, conferring on it an open structure. The RuvB hexamer acts as an ATP-dependent pump, pulling dsDNA into and through the RuvAB complex. HJ branch migration allows RuvC to scan DNA until it finds its consensus sequence, where it cleaves and resolves the cruciform DNA. This chain is Holliday junction branch migration complex subunit RuvA, found in Lachnospira eligens (strain ATCC 27750 / DSM 3376 / VPI C15-48 / C15-B4) (Eubacterium eligens).